A 175-amino-acid chain; its full sequence is Alpha-crystallin B chain (175 aa).

M1 is subject to N-acetylmethionine. At S19 the chain carries Phosphoserine. The O-linked (GlcNAc) serine glycan is linked to S41. Phosphoserine occurs at positions 45 and 59. Residues 56–164 (RAPSWIDTGL…PERTIPITRE (109 aa)) form the sHSP domain. H83 contributes to the Zn(2+) binding site. K92 carries the post-translational modification N6-acetyllysine. Residues H104, E106, H111, and H119 each contribute to the Zn(2+) site. The disordered stretch occupies residues 139 to 175 (SDGVLTMNGPRKQASGPERTIPITREEKPAVTAAPKK). The residue at position 166 (K166) is an N6-acetyllysine. The O-linked (GlcNAc) threonine glycan is linked to T170.

It belongs to the small heat shock protein (HSP20) family. As to quaternary structure, heteromer composed of three CRYAA and one CRYAB subunits. Aggregates with homologous proteins, including the small heat shock protein HSPB1, to form large heteromeric complexes. Inter-subunit bridging via zinc ions enhances stability, which is crucial as there is no protein turn over in the lens. Interacts with HSPBAP1 and TTN/titin. Interacts with TMEM109; in the cellular response to DNA damage. Interacts with DES; binds rapidly during early stages of DES filament assembly and a reduced binding seen in the later stages. Interacts with ATP6V1A and with MTOR, forming a ternary complex.

The protein resides in the cytoplasm. The protein localises to the nucleus. Its subcellular location is the secreted. It localises to the lysosome. Its function is as follows. May contribute to the transparency and refractive index of the lens. Has chaperone-like activity, preventing aggregation of various proteins under a wide range of stress conditions. In lens epithelial cells, stabilizes the ATP6V1A protein, preventing its degradation by the proteasome. The polypeptide is Alpha-crystallin B chain (CRYAB) (Ovis aries (Sheep)).